Here is a 145-residue protein sequence, read N- to C-terminus: Nucleoside diphosphate kinase (145 aa).

ATP-binding residues include Lys11, Phe59, Arg87, Thr93, Arg104, and Asn114. His117 acts as the Pros-phosphohistidine intermediate in catalysis.

The protein belongs to the NDK family. Mg(2+) is required as a cofactor.

The protein localises to the cytoplasm. It carries out the reaction a 2'-deoxyribonucleoside 5'-diphosphate + ATP = a 2'-deoxyribonucleoside 5'-triphosphate + ADP. The enzyme catalyses a ribonucleoside 5'-diphosphate + ATP = a ribonucleoside 5'-triphosphate + ADP. Functionally, major role in the synthesis of nucleoside triphosphates other than ATP. The ATP gamma phosphate is transferred to the NDP beta phosphate via a ping-pong mechanism, using a phosphorylated active-site intermediate. This Sulfolobus acidocaldarius (strain ATCC 33909 / DSM 639 / JCM 8929 / NBRC 15157 / NCIMB 11770) protein is Nucleoside diphosphate kinase.